A 275-amino-acid polypeptide reads, in one-letter code: Large ribosomal subunit protein uL2 (275 aa).

The interval 223–260 is disordered; it reads VAMNPVDHPHGGGEGRTSGGRHPVSPWGLPTKGYKTRS.

Belongs to the universal ribosomal protein uL2 family. In terms of assembly, part of the 50S ribosomal subunit. Forms a bridge to the 30S subunit in the 70S ribosome.

One of the primary rRNA binding proteins. Required for association of the 30S and 50S subunits to form the 70S ribosome, for tRNA binding and peptide bond formation. It has been suggested to have peptidyltransferase activity; this is somewhat controversial. Makes several contacts with the 16S rRNA in the 70S ribosome. This Legionella pneumophila (strain Lens) protein is Large ribosomal subunit protein uL2.